The chain runs to 147 residues: Endoribonuclease YbeY (147 aa).

Residues His108, His112, and His118 each coordinate Zn(2+).

It belongs to the endoribonuclease YbeY family. It depends on Zn(2+) as a cofactor.

It is found in the cytoplasm. Single strand-specific metallo-endoribonuclease involved in late-stage 70S ribosome quality control and in maturation of the 3' terminus of the 16S rRNA. The polypeptide is Endoribonuclease YbeY (Sulfurovum sp. (strain NBC37-1)).